The following is a 214-amino-acid chain: N-(5'-phosphoribosyl)anthranilate isomerase (214 aa).

The protein belongs to the TrpF family.

It carries out the reaction N-(5-phospho-beta-D-ribosyl)anthranilate = 1-(2-carboxyphenylamino)-1-deoxy-D-ribulose 5-phosphate. Its pathway is amino-acid biosynthesis; L-tryptophan biosynthesis; L-tryptophan from chorismate: step 3/5. This chain is N-(5'-phosphoribosyl)anthranilate isomerase, found in Halorubrum lacusprofundi (strain ATCC 49239 / DSM 5036 / JCM 8891 / ACAM 34).